The chain runs to 148 residues: Nucleoside diphosphate kinase 1 (148 aa).

Lysine 9, phenylalanine 57, arginine 85, threonine 91, arginine 102, and asparagine 112 together coordinate ATP. The Pros-phosphohistidine intermediate role is filled by histidine 115.

Belongs to the NDK family. Mg(2+) serves as cofactor. In terms of processing, the N-terminus is blocked.

It catalyses the reaction a 2'-deoxyribonucleoside 5'-diphosphate + ATP = a 2'-deoxyribonucleoside 5'-triphosphate + ADP. The enzyme catalyses a ribonucleoside 5'-diphosphate + ATP = a ribonucleoside 5'-triphosphate + ADP. In terms of biological role, major role in the synthesis of nucleoside triphosphates other than ATP. The ATP gamma phosphate is transferred to the NDP beta phosphate via a ping-pong mechanism, using a phosphorylated active-site intermediate. The sequence is that of Nucleoside diphosphate kinase 1 (NDPK1) from Spinacia oleracea (Spinach).